We begin with the raw amino-acid sequence, 839 residues long: Phenylalanine--tRNA ligase beta subunit (839 aa).

Residues 42 to 166 (GELTGPIVIG…PPSVEGHQLV (125 aa)) form the tRNA-binding domain. The 76-residue stretch at 421 to 496 (PEMPRQTINA…RKIGFDRIKA (76 aa)) folds into the B5 domain. Mg(2+)-binding residues include Asp-474, Asp-480, Glu-483, and Glu-484. The region spanning 745-838 (SSFPVAKEDV…AEETCGAQLR (94 aa)) is the FDX-ACB domain.

It belongs to the phenylalanyl-tRNA synthetase beta subunit family. Type 1 subfamily. Tetramer of two alpha and two beta subunits. It depends on Mg(2+) as a cofactor.

Its subcellular location is the cytoplasm. The catalysed reaction is tRNA(Phe) + L-phenylalanine + ATP = L-phenylalanyl-tRNA(Phe) + AMP + diphosphate + H(+). This is Phenylalanine--tRNA ligase beta subunit from Cutibacterium acnes (strain DSM 16379 / KPA171202) (Propionibacterium acnes).